Here is a 197-residue protein sequence, read N- to C-terminus: Imidazoleglycerol-phosphate dehydratase (197 aa).

It belongs to the imidazoleglycerol-phosphate dehydratase family.

The protein localises to the cytoplasm. The enzyme catalyses D-erythro-1-(imidazol-4-yl)glycerol 3-phosphate = 3-(imidazol-4-yl)-2-oxopropyl phosphate + H2O. Its pathway is amino-acid biosynthesis; L-histidine biosynthesis; L-histidine from 5-phospho-alpha-D-ribose 1-diphosphate: step 6/9. This Pseudomonas putida (strain W619) protein is Imidazoleglycerol-phosphate dehydratase.